The sequence spans 366 residues: Sperm equatorial segment protein 1 (366 aa).

The N-terminal stretch at 1 to 18 is a signal peptide; sequence MKFLVLLVALLLWPSSLP. Asn-129 carries an N-linked (GlcNAc...) asparagine glycan. Residues 139-204 are disordered; it reads PFIEKDEPEP…EDVPQLSGDN (66 aa). Residues 144–157 are compositionally biased toward acidic residues; the sequence is DEPEPEPEPEPEPE. Polar residues predominate over residues 165–189; sequence APTQVPSVTEPSQDVTSLSGSTDLG.

The protein belongs to the SPESP1 family. Glycosylated. In testis there are two predominant forms of 77- and 67-kDa and a form of 47-kDa, whereas in epididymal sperm from caput, corpus, and cauda there are two forms of 47- and 43-kDa. Testis forms contain complex carbohydrate residues. Epididymal sperm forms are N-glycosylated. Then undergoes significant glycosylation in the testis and that the majority of these glycoconjugates are removed by the time sperm reach the caput epididymis.

It is found in the cytoplasmic vesicle. It localises to the secretory vesicle. The protein resides in the acrosome. Involved in fertilization ability of sperm. This Bos taurus (Bovine) protein is Sperm equatorial segment protein 1.